We begin with the raw amino-acid sequence, 305 residues long: GS homeobox 2 (305 aa).

2 disordered regions span residues 115-151 (DAQFCPRVSHAHHHHHPPQHHHHHHQPQQPGSAAAAA) and 259-305 (KKEG…ISPL). Basic residues predominate over residues 123 to 140 (SHAHHHHHPPQHHHHHHQ). The segment covering 141 to 151 (PQQPGSAAAAA) has biased composition (low complexity). Residues 203–262 (GKRMRTAFTSTQLLELEREFSSNMYLSRLRRIEIATYLNLSEKQVKIWFQNRRVKHKKEG) constitute a DNA-binding region (homeobox).

Belongs to the Antp homeobox family.

The protein localises to the nucleus. In terms of biological role, transcription factor that binds 5'-CNAATTAG-3' DNA sequence and regulates the expression of numerous genes including genes important for brain development. During telencephalic development, causes ventralization of pallial progenitors and, depending on the developmental stage, specifies different neuronal fates. At early stages, necessary and sufficient to correctly specify the ventral lateral ganglionic eminence (LGE) and its major derivatives, the striatal projection neurons. At later stages, may specify LGE progenitors toward dorsal LGE fates, including olfactory bulb interneurons. In Mus musculus (Mouse), this protein is GS homeobox 2 (Gsx2).